A 208-amino-acid polypeptide reads, in one-letter code: Ribosome maturation factor RimP (208 aa).

The segment at 165-208 is disordered; sequence TAQPKKGQRQGKEPAKESGQKKQLAEAAPRSGSKRSERGSEKRK. Basic and acidic residues-rich tracts occupy residues 174–188 and 198–208; these read QGKE…KKQL and KRSERGSEKRK.

The protein belongs to the RimP family.

It is found in the cytoplasm. In terms of biological role, required for maturation of 30S ribosomal subunits. In Sorangium cellulosum (strain So ce56) (Polyangium cellulosum (strain So ce56)), this protein is Ribosome maturation factor RimP.